A 466-amino-acid chain; its full sequence is ATP synthase subunit beta (466 aa).

148–155 (GGAGVGKT) contributes to the ATP binding site.

This sequence belongs to the ATPase alpha/beta chains family. As to quaternary structure, F-type ATPases have 2 components, CF(1) - the catalytic core - and CF(0) - the membrane proton channel. CF(1) has five subunits: alpha(3), beta(3), gamma(1), delta(1), epsilon(1). CF(0) has three main subunits: a(1), b(2) and c(9-12). The alpha and beta chains form an alternating ring which encloses part of the gamma chain. CF(1) is attached to CF(0) by a central stalk formed by the gamma and epsilon chains, while a peripheral stalk is formed by the delta and b chains.

It localises to the cell inner membrane. It catalyses the reaction ATP + H2O + 4 H(+)(in) = ADP + phosphate + 5 H(+)(out). Its function is as follows. Produces ATP from ADP in the presence of a proton gradient across the membrane. The catalytic sites are hosted primarily by the beta subunits. In Xylella fastidiosa (strain M23), this protein is ATP synthase subunit beta.